A 354-amino-acid polypeptide reads, in one-letter code: Homoserine O-succinyltransferase (354 aa).

Cys-146 functions as the Acyl-thioester intermediate in the catalytic mechanism. 2 residues coordinate substrate: Lys-167 and Ser-196. The active-site Proton acceptor is the His-239. Glu-241 is a catalytic residue. Arg-253 is a binding site for substrate.

It belongs to the MetA family.

The protein localises to the cytoplasm. The catalysed reaction is L-homoserine + succinyl-CoA = O-succinyl-L-homoserine + CoA. It participates in amino-acid biosynthesis; L-methionine biosynthesis via de novo pathway; O-succinyl-L-homoserine from L-homoserine: step 1/1. Functionally, transfers a succinyl group from succinyl-CoA to L-homoserine, forming succinyl-L-homoserine. This chain is Homoserine O-succinyltransferase, found in Methylobacter tundripaludum (strain ATCC BAA-1195 / DSM 17260 / SV96).